The chain runs to 467 residues: Tripartite motif-containing protein 75 (467 aa).

An RING-type zinc finger spans residues 16–57 (CPICLDDLTDPVTVECGHNFCRSCIKDFWAGQQATSSCPVCR). Residues 90 to 131 (ESSTSCERHNQALTLFCEDDLQLLCDQCVEPESHGRHQVLSI) form a B box-type zinc finger. Zn(2+) is bound by residues Cys95, His98, Cys117, and His123. The stretch at 168-222 (VTLREQAEAQRSQLTSECEKLMRFLDQEERAAFSRLEDEEMRLEKRLLDNIAALE) forms a coiled coil. Residues 276–466 (YSFPLQYSAL…LRLCSATDSE (191 aa)) form the B30.2/SPRY domain.

This sequence belongs to the TRIM/RBCC family.

It is found in the cytoplasm. Its subcellular location is the cytoskeleton. It localises to the spindle. May play a role in female meiosis. In Mus musculus (Mouse), this protein is Tripartite motif-containing protein 75.